We begin with the raw amino-acid sequence, 156 residues long: MQTTKNQDDLVRIFKAILKEERFGSQSEIVAALQAEGFSNINQSKVSRMLSKFGAVRTRNAKQEMVYCLPAELGVPTAGSPLKNLVLDVDHNQAMIVVRTSPGAAQLIARLLDSIGKPEGILGTIAGDDTIFICPSSIQDIADTLETIKSLFNYAE.

Belongs to the ArgR family.

It localises to the cytoplasm. It participates in amino-acid biosynthesis; L-arginine biosynthesis [regulation]. Regulates arginine biosynthesis genes. The sequence is that of Arginine repressor from Shewanella sp. (strain ANA-3).